The chain runs to 445 residues: Tubulin beta-2 chain (445 aa).

The GTP site is built by Q11, E69, S138, G142, T143, G144, N204, and N226. E69 contributes to the Mg(2+) binding site. A disordered region spans residues 424–445; that stretch reads QYQDATAEDEGEFDEDEEVEEA. Acidic residues predominate over residues 429–445; sequence TAEDEGEFDEDEEVEEA.

It belongs to the tubulin family. Dimer of alpha and beta chains. A typical microtubule is a hollow water-filled tube with an outer diameter of 25 nm and an inner diameter of 15 nM. Alpha-beta heterodimers associate head-to-tail to form protofilaments running lengthwise along the microtubule wall with the beta-tubulin subunit facing the microtubule plus end conferring a structural polarity. Microtubules usually have 13 protofilaments but different protofilament numbers can be found in some organisms and specialized cells. Mg(2+) is required as a cofactor.

It is found in the cytoplasm. The protein resides in the cytoskeleton. Functionally, tubulin is the major constituent of microtubules, a cylinder consisting of laterally associated linear protofilaments composed of alpha- and beta-tubulin heterodimers. Microtubules grow by the addition of GTP-tubulin dimers to the microtubule end, where a stabilizing cap forms. Below the cap, tubulin dimers are in GDP-bound state, owing to GTPase activity of alpha-tubulin. This Echinococcus multilocularis (Fox tapeworm) protein is Tubulin beta-2 chain (TUB-2).